Here is a 430-residue protein sequence, read N- to C-terminus: Small ribosomal subunit protein uS3m (430 aa).

It belongs to the universal ribosomal protein uS3 family.

Its subcellular location is the mitochondrion. The polypeptide is Small ribosomal subunit protein uS3m (RPS3) (Marchantia polymorpha (Common liverwort)).